Here is a 59-residue protein sequence, read N- to C-terminus: Large ribosomal subunit protein uL30 (59 aa).

Belongs to the universal ribosomal protein uL30 family. In terms of assembly, part of the 50S ribosomal subunit.

This is Large ribosomal subunit protein uL30 from Proteus mirabilis (strain HI4320).